Consider the following 174-residue polypeptide: Crossover junction endodeoxyribonuclease RuvC (174 aa).

Catalysis depends on residues Asp-8, Glu-67, and Asp-139. 3 residues coordinate Mg(2+): Asp-8, Glu-67, and Asp-139.

It belongs to the RuvC family. Homodimer which binds Holliday junction (HJ) DNA. The HJ becomes 2-fold symmetrical on binding to RuvC with unstacked arms; it has a different conformation from HJ DNA in complex with RuvA. In the full resolvosome a probable DNA-RuvA(4)-RuvB(12)-RuvC(2) complex forms which resolves the HJ. Mg(2+) serves as cofactor.

The protein resides in the cytoplasm. It carries out the reaction Endonucleolytic cleavage at a junction such as a reciprocal single-stranded crossover between two homologous DNA duplexes (Holliday junction).. Its function is as follows. The RuvA-RuvB-RuvC complex processes Holliday junction (HJ) DNA during genetic recombination and DNA repair. Endonuclease that resolves HJ intermediates. Cleaves cruciform DNA by making single-stranded nicks across the HJ at symmetrical positions within the homologous arms, yielding a 5'-phosphate and a 3'-hydroxyl group; requires a central core of homology in the junction. The consensus cleavage sequence is 5'-(A/T)TT(C/G)-3'. Cleavage occurs on the 3'-side of the TT dinucleotide at the point of strand exchange. HJ branch migration catalyzed by RuvA-RuvB allows RuvC to scan DNA until it finds its consensus sequence, where it cleaves and resolves the cruciform DNA. The protein is Crossover junction endodeoxyribonuclease RuvC of Pseudomonas entomophila (strain L48).